The primary structure comprises 137 residues: Basic phospholipase A2 homolog Ts-R6 (137 aa).

A signal peptide spans 1–16; it reads MRTLWIMAVLLLGVEG. 7 disulfides stabilise this stretch: C42–C130, C44–C60, C59–C110, C65–C137, C66–C103, C73–C97, and C91–C101.

In terms of tissue distribution, expressed by the venom gland.

It is found in the secreted. In terms of biological role, snake venom phospholipase A2 homolog that induces local edema a few hours after injection (5-10 ug) in the hind paw and shows weak anticoagulant and myotoxic activities. The polypeptide is Basic phospholipase A2 homolog Ts-R6 (Trimeresurus stejnegeri (Chinese green tree viper)).